The sequence spans 95 residues: Beta-defensin 132 (95 aa).

An N-terminal signal peptide occupies residues 1–22; sequence MKFLLLVLAALGFLTQVIPASA. 3 disulfides stabilise this stretch: Cys27-Cys55, Cys35-Cys49, and Cys39-Cys56. The disordered stretch occupies residues 74-95; the sequence is HWQSRRRNTQRKDKKQQTTVTS. Residues 76 to 87 are compositionally biased toward basic residues; it reads QSRRRNTQRKDK.

The protein belongs to the beta-defensin family.

Its subcellular location is the secreted. Functionally, has antibacterial activity. This Homo sapiens (Human) protein is Beta-defensin 132 (DEFB132).